A 196-amino-acid polypeptide reads, in one-letter code: Pyridoxal 5'-phosphate synthase subunit PdxT (196 aa).

46–48 (GES) provides a ligand contact to L-glutamine. The Nucleophile role is filled by cysteine 78. Residues arginine 105 and 133–134 (IR) each bind L-glutamine. Catalysis depends on charge relay system residues histidine 169 and glutamate 171.

It belongs to the glutaminase PdxT/SNO family. In terms of assembly, in the presence of PdxS, forms a dodecamer of heterodimers. Only shows activity in the heterodimer.

It catalyses the reaction aldehydo-D-ribose 5-phosphate + D-glyceraldehyde 3-phosphate + L-glutamine = pyridoxal 5'-phosphate + L-glutamate + phosphate + 3 H2O + H(+). The enzyme catalyses L-glutamine + H2O = L-glutamate + NH4(+). The protein operates within cofactor biosynthesis; pyridoxal 5'-phosphate biosynthesis. Catalyzes the hydrolysis of glutamine to glutamate and ammonia as part of the biosynthesis of pyridoxal 5'-phosphate. The resulting ammonia molecule is channeled to the active site of PdxS. This Geobacillus stearothermophilus (Bacillus stearothermophilus) protein is Pyridoxal 5'-phosphate synthase subunit PdxT.